A 480-amino-acid chain; its full sequence is Immune evasion protein OPG047 (480 aa).

The BTB domain occupies 10 to 90 (CKNILALSMT…SYTGKVYIDS (81 aa)). The region spanning 125–223 (CVECYMMGIE…NYLSPRGINN (99 aa)) is the BACK domain. 5 Kelch repeats span residues 273 to 319 (VVYL…PANN), 320 to 363 (KLYV…SINN), 365 to 408 (IYVM…VFGR), 410 to 447 (LFLVGRNAEFYCESSNTWTLIDDPIYPRDNPELIIVDN), and 448 to 480 (KLLLIGGFYRGSYIDTIEVYNHHTYSWNIWDGK).

The protein belongs to the orthopoxvirus OPG047 family.

Its function is as follows. Might have a role in the suppression of host immune response. This Vaccinia virus (strain Copenhagen) (VACV) protein is Immune evasion protein OPG047 (OPG047).